Here is a 447-residue protein sequence, read N- to C-terminus: Retinoic acid receptor alpha (447 aa).

The interval 1-79 (MAGKGNPVPG…PPPPPRVYKP (79 aa)) is modulating. Over residues 47-61 (TPSPATIETQSTSSE) the composition is skewed to polar residues. The segment at 47–72 (TPSPATIETQSTSSEEIVPSPPSPPP) is disordered. 2 consecutive NR C4-type zinc fingers follow at residues 80-100 (CFVC…CEGC) and 116-140 (CHRE…LQKC). The segment at residues 80–145 (CFVCQDKSSG…RLQKCLEVGM (66 aa)) is a DNA-binding region (nuclear receptor). The segment at 146–174 (SKESVRNDRNKKKKDEKKPECIENYVLSP) is hinge. In terms of domain architecture, NR LBD spans 175 to 409 (DTEQMINRVR…PLIQEMLENS (235 aa)). Positions 400 to 408 (PLIQEMLEN) match the 9aaTAD motif. Residues 407–447 (ENSEGLESGATGSRPSGAPPGSCSPSLSPSSAQSSPPTQSP) form a disordered region. Low complexity predominate over residues 414–447 (SGATGSRPSGAPPGSCSPSLSPSSAQSSPPTQSP).

Belongs to the nuclear hormone receptor family. NR1 subfamily. Heterodimer; with an rxr molecule. Binds DNA preferentially as a rar/rxr heterodimer.

Its subcellular location is the nucleus. Functionally, receptor for retinoic acid. Retinoic acid receptors bind as heterodimers to their target response elements in response to their ligands, all-trans or 9-cis retinoic acid, and regulate gene expression in various biological processes. The rar/rxr heterodimers bind to the retinoic acid response elements (RARE) composed of tandem 5'-AGGTCA-3' sites known as DR1-DR5. The sequence is that of Retinoic acid receptor alpha (rara) from Takifugu rubripes (Japanese pufferfish).